Here is a 382-residue protein sequence, read N- to C-terminus: F-box protein At3g19470 (382 aa).

The 44-residue stretch at M1–H44 folds into the F-box domain.

This is F-box protein At3g19470 from Arabidopsis thaliana (Mouse-ear cress).